Here is a 276-residue protein sequence, read N- to C-terminus: Shikimate dehydrogenase (NADP(+)) (276 aa).

Shikimate is bound by residues 15–17 (SKS) and T62. The active-site Proton acceptor is the K66. Shikimate-binding residues include N87 and D103. NADP(+)-binding positions include 127 to 131 (GAGGA), 151 to 156 (NRTLSK), and M215. Y217 is a binding site for shikimate. G239 is an NADP(+) binding site.

It belongs to the shikimate dehydrogenase family. As to quaternary structure, homodimer.

It carries out the reaction shikimate + NADP(+) = 3-dehydroshikimate + NADPH + H(+). The protein operates within metabolic intermediate biosynthesis; chorismate biosynthesis; chorismate from D-erythrose 4-phosphate and phosphoenolpyruvate: step 4/7. Its function is as follows. Involved in the biosynthesis of the chorismate, which leads to the biosynthesis of aromatic amino acids. Catalyzes the reversible NADPH linked reduction of 3-dehydroshikimate (DHSA) to yield shikimate (SA). The polypeptide is Shikimate dehydrogenase (NADP(+)) (Cellvibrio japonicus (strain Ueda107) (Pseudomonas fluorescens subsp. cellulosa)).